Consider the following 373-residue polypeptide: CXADR-like membrane protein (373 aa).

The N-terminal stretch at 1–18 (MSLLLLLLLVSYYVGTLG) is a signal peptide. Ig-like C2-type domains are found at residues 19–127 (THTE…VILK) and 135–224 (PKCE…VRVT). The Extracellular segment spans residues 19–235 (THTEIKRVAE…QYVQSIGMVA (217 aa)). 2 cysteine pairs are disulfide-bonded: Cys35–Cys111 and Cys153–Cys208. N-linked (GlcNAc...) asparagine glycosylation is found at Asn74 and Asn197. A helical membrane pass occupies residues 236–256 (GAVTGIVAGALLIFLLVWLLI). The Cytoplasmic segment spans residues 257-373 (RRKDKERYEE…PSQSRAFQTV (117 aa)). Residues 264–281 (YEEEERPNEIREDAEAPK) show a composition bias toward basic and acidic residues. The interval 264–373 (YEEEERPNEI…PSQSRAFQTV (110 aa)) is disordered. Residues 288–314 (SSSSSGSRSSRSGSSSTRSTANSASRS) show a composition bias toward low complexity. Residues 355–373 (KAETTPSMIPSQSRAFQTV) are compositionally biased toward polar residues.

As to expression, predominantly expressed in epithelial cells within different tissues and in the white adipose tissue. Expressed at high levels in small intestine and placenta, at intermediate levels in the heart, skeletal muscle, colon, spleen, kidney and lung and at low levels in the liver and peripheral blood leukocytes. Highly abundant in the intestine during embryo and fetal development (at protein level).

It localises to the cell junction. It is found in the tight junction. The protein resides in the cell membrane. Functionally, may be involved in the cell-cell adhesion. May play a role in adipocyte differentiation and development of obesity. Is required for normal small intestine development. The polypeptide is CXADR-like membrane protein (CLMP) (Homo sapiens (Human)).